A 345-amino-acid chain; its full sequence is Glycerol-3-phosphate dehydrogenase [NAD(P)+] (345 aa).

Residues S11, W12, H32, R33, and K106 each contribute to the NADPH site. Sn-glycerol 3-phosphate is bound by residues K106, G137, and S139. A141 serves as a coordination point for NADPH. Sn-glycerol 3-phosphate-binding residues include K192, D245, S255, R256, and N257. K192 serves as the catalytic Proton acceptor. Position 256 (R256) interacts with NADPH. V280 and E282 together coordinate NADPH.

Belongs to the NAD-dependent glycerol-3-phosphate dehydrogenase family.

The protein localises to the cytoplasm. The catalysed reaction is sn-glycerol 3-phosphate + NAD(+) = dihydroxyacetone phosphate + NADH + H(+). It carries out the reaction sn-glycerol 3-phosphate + NADP(+) = dihydroxyacetone phosphate + NADPH + H(+). Its pathway is membrane lipid metabolism; glycerophospholipid metabolism. Catalyzes the reduction of the glycolytic intermediate dihydroxyacetone phosphate (DHAP) to sn-glycerol 3-phosphate (G3P), the key precursor for phospholipid synthesis. This Bacillus velezensis (strain DSM 23117 / BGSC 10A6 / LMG 26770 / FZB42) (Bacillus amyloliquefaciens subsp. plantarum) protein is Glycerol-3-phosphate dehydrogenase [NAD(P)+].